The primary structure comprises 461 residues: Eukaryotic translation initiation factor 3 subunit M (461 aa).

The interval 42–61 (LLEPLRQQEQSDAEPDRKQR) is disordered. The region spanning 205–376 (DQELAQTHVV…SEFLVHRATY (172 aa)) is the PCI domain. Residues 422–461 (AAEEAAQGKSGDKKGDRRQRRDQPQQSQPAPEAATAVAAE) form a disordered region. The segment covering 431–444 (SGDKKGDRRQRRDQ) has biased composition (basic and acidic residues). Residues 445–461 (PQQSQPAPEAATAVAAE) show a composition bias toward low complexity.

Belongs to the eIF-3 subunit M family. In terms of assembly, component of the eukaryotic translation initiation factor 3 (eIF-3) complex.

Its subcellular location is the cytoplasm. Functionally, component of the eukaryotic translation initiation factor 3 (eIF-3) complex, which is involved in protein synthesis of a specialized repertoire of mRNAs and, together with other initiation factors, stimulates binding of mRNA and methionyl-tRNAi to the 40S ribosome. The eIF-3 complex specifically targets and initiates translation of a subset of mRNAs involved in cell proliferation. The polypeptide is Eukaryotic translation initiation factor 3 subunit M (Aspergillus terreus (strain NIH 2624 / FGSC A1156)).